Reading from the N-terminus, the 437-residue chain is Amino-acid acetyltransferase (437 aa).

Residues 289–429 (ENIRLATSFD…EHYNYQRMSK (141 aa)) form the N-acetyltransferase domain.

The protein belongs to the acetyltransferase family. ArgA subfamily.

The protein localises to the cytoplasm. The enzyme catalyses L-glutamate + acetyl-CoA = N-acetyl-L-glutamate + CoA + H(+). Its pathway is amino-acid biosynthesis; L-arginine biosynthesis; N(2)-acetyl-L-ornithine from L-glutamate: step 1/4. The chain is Amino-acid acetyltransferase from Actinobacillus pleuropneumoniae serotype 7 (strain AP76).